A 560-amino-acid chain; its full sequence is MLRNGQNQAQLLARSLGQLARGMASSKRVSSKKEDLKPKLPKPPTVEIPMEEPLNASYLSKTLGSSYRSWAAALEKHPELKTLKRKDLLSSYDTLKSLDYSVDDIIAKPMIIYYGATTLANRHSVLQECGFHNVTVQTLAKYVTVVNKPIEVLKAHNYIPFDVKVAERLAGYFKDIKLPVDLRELESETLTLKSLRQSLINAYLRERLQMDDNDLQKLWRVYTRIRHKSFRAVQDTIELLTKEFNFSAERLRKNSFLLYSEADNVRRILREVPTIDSQDIREIGFRRPKILMSTCDSLKQTLQHVHAFGISEDAVLRCLEVLTLGPDTVLERLRDLQEIEEFQVLGTNPRILRLVHYQNKARLRLDYLNQLRVRCASLHILSCGSEAFAKFARDGSDRTKGRDIVVYLSNVLGKDVQVLRNLLSRHPNWCHIPLLHVKQCLEYLRSKKFKLNEIFANIHLLLYPIKRIEEKMLLLQSPDAQEDLQLPVANFDSLSNNEILTLILYLIESEFHFTGDGIWTEQHTHHVENFNNLLPDFPESLNKVYKYGVKPAEKMIMERL.

The transit peptide at 1–23 (MLRNGQNQAQLLARSLGQLARGM) directs the protein to the mitochondrion. The tract at residues 23 to 47 (MASSKRVSSKKEDLKPKLPKPPTVE) is disordered.

Belongs to the mTERF family. In terms of assembly, probably binds to the mTTF-DNA complex.

The protein resides in the mitochondrion. Its function is as follows. Binds promoter DNA and regulates initiation of transcription. Regulates mitochondrial replication and transcription. Required for normal topology and maintenance of mitochondrial DNA (mtDNA) levels. Regulates mtDNA replication by re-activating replication after replication pausing. Likely to regulate replication pausing by coordinating with the mitochondrial termination factor mTTF which promotes replication pausing. Their function in replication pausing prevents unregulated replication that may occur for example by collisions between the machineries of DNA replication and transcription during mtDNA synthesis. This ensures the incorporation of RNA transcripts into replication intermediates at the replication fork and allows for proper fork progression. Possibly functions downstream of Dref which activates genes involved in mtDNA replication and maintenance. This is Transcription termination factor 5, mitochondrial from Drosophila melanogaster (Fruit fly).